Reading from the N-terminus, the 183-residue chain is ATP synthase subunit b, chloroplastic (183 aa).

A helical transmembrane segment spans residues 27 to 49 (LATNLINLTVVVGVLIFFGKGVL).

Belongs to the ATPase B chain family. As to quaternary structure, F-type ATPases have 2 components, F(1) - the catalytic core - and F(0) - the membrane proton channel. F(1) has five subunits: alpha(3), beta(3), gamma(1), delta(1), epsilon(1). F(0) has four main subunits: a(1), b(1), b'(1) and c(10-14). The alpha and beta chains form an alternating ring which encloses part of the gamma chain. F(1) is attached to F(0) by a central stalk formed by the gamma and epsilon chains, while a peripheral stalk is formed by the delta, b and b' chains.

The protein resides in the plastid. It localises to the chloroplast thylakoid membrane. In terms of biological role, f(1)F(0) ATP synthase produces ATP from ADP in the presence of a proton or sodium gradient. F-type ATPases consist of two structural domains, F(1) containing the extramembraneous catalytic core and F(0) containing the membrane proton channel, linked together by a central stalk and a peripheral stalk. During catalysis, ATP synthesis in the catalytic domain of F(1) is coupled via a rotary mechanism of the central stalk subunits to proton translocation. Component of the F(0) channel, it forms part of the peripheral stalk, linking F(1) to F(0). In Hordeum vulgare (Barley), this protein is ATP synthase subunit b, chloroplastic.